We begin with the raw amino-acid sequence, 317 residues long: MRISTQMMYEQNMSGITNSQAEWMKLGEQMSTGKRVTNPSDDPIAASQAVVLSQAQAQNSQYALARTFATQKVSLEESVLSQVTTAIQTAQEKIVYAGNGTLSDDDRASLATDLQGIRDQLMNLANSTDGNGRYIFAGYKTEAAPFDQATGGYHGGEKSVTQQVDSARTMVIGHTGAQIFNSITSNAVPEPDGSDSEKNLFVMLDTAIAALKTPVEGNNVEKEKAAAAIDKTNRGLKNSLNNVLTVRAELGTQLSELSTLDSLGSDRALGQKLQMSNLVDVDWNSVISSYVMQQAALQASYKTFTDMQGMSLFQLNR.

The protein belongs to the bacterial flagellin family.

The protein localises to the secreted. The protein resides in the bacterial flagellum. The sequence is that of Flagellar hook-associated protein 3 (flgL) from Salmonella typhimurium (strain LT2 / SGSC1412 / ATCC 700720).